A 426-amino-acid polypeptide reads, in one-letter code: MLQHQIVQSPARLGLTGPGSPSVQNPTPTRHGHPTSSSSSQSQHQQIQQQPNLLPSSTVAAASSASASAAVSSSALLSLLPPLPRAQALLQQMAVLTSKLFDVSPNRAIWLSAFRGSLPSFLSSHSLPPPPPLENPSPSSTKEILSQFNSLQTQLFEAVTELQEILDLQDAKQKVAREIKSKDSSLLAFANKLKDAERVLDMLVDDYSDYRKPKRSKIEEDDEDNDNESSSSSTTVSSQLKLKDILAYAHKISYTTFAPPEFGAGQAPLRGALPPAPQDEQMRASQLYTFADLDIGLPKTVENMEKKVEALIEPPPPPEAMDISAIHNLLPPNIAVPSGWKPGMPVELPRDLPLPPPGWKPGDPVVLPPLESIAAPRAEDHQHMRPSQGLHRPPDVIQVRAVQLDILEDDDSSDYSSDDASSDDED.

The disordered stretch occupies residues 1–56 (MLQHQIVQSPARLGLTGPGSPSVQNPTPTRHGHPTSSSSSQSQHQQIQQQPNLLPS). Polar residues predominate over residues 19 to 28 (GSPSVQNPTP). Positions 36-56 (SSSSSQSQHQQIQQQPNLLPS) are enriched in low complexity. Residues 160–212 (TELQEILDLQDAKQKVAREIKSKDSSLLAFANKLKDAERVLDMLVDDYSDYRK) adopt a coiled-coil conformation. Disordered regions lie at residues 214-236 (KRSK…STTV) and 373-426 (IAAP…DDED). The span at 406 to 426 (ILEDDDSSDYSSDDASSDDED) shows a compositional bias: acidic residues.

The protein belongs to the Mediator complex subunit 4 family. Component of the Mediator complex.

It localises to the nucleus. Functionally, component of the Mediator complex, a coactivator involved in the regulated transcription of nearly all RNA polymerase II-dependent genes. Mediator functions as a bridge to convey information from gene-specific regulatory proteins to the basal RNA polymerase II transcription machinery. The Mediator complex, having a compact conformation in its free form, is recruited to promoters by direct interactions with regulatory proteins and serves for the assembly of a functional preinitiation complex with RNA polymerase II and the general transcription factors. The sequence is that of Mediator of RNA polymerase II transcription subunit 4 (MED4) from Arabidopsis thaliana (Mouse-ear cress).